We begin with the raw amino-acid sequence, 269 residues long: Indole-3-glycerol phosphate synthase 1 (269 aa).

It belongs to the TrpC family.

It carries out the reaction 1-(2-carboxyphenylamino)-1-deoxy-D-ribulose 5-phosphate + H(+) = (1S,2R)-1-C-(indol-3-yl)glycerol 3-phosphate + CO2 + H2O. The protein operates within amino-acid biosynthesis; L-tryptophan biosynthesis; L-tryptophan from chorismate: step 4/5. This chain is Indole-3-glycerol phosphate synthase 1 (trpC1), found in Streptomyces coelicolor (strain ATCC BAA-471 / A3(2) / M145).